Reading from the N-terminus, the 65-residue chain is Photosystem II reaction center protein J (65 aa).

Positions 1 to 17 (MSTKLKGPDGRIPDRLP) are enriched in basic and acidic residues. The disordered stretch occupies residues 1–20 (MSTKLKGPDGRIPDRLPDGT). The helical transmembrane segment at 36-56 (LWLVATVGGMAVLSVLGLFFF) threads the bilayer.

The protein belongs to the PsbJ family. As to quaternary structure, PSII is composed of 1 copy each of membrane proteins PsbA, PsbB, PsbC, PsbD, PsbE, PsbF, PsbH, PsbI, PsbJ, PsbK, PsbL, PsbM, PsbT, PsbX, PsbY, Psb30/Ycf12, peripheral proteins PsbO, CyanoQ (PsbQ), PsbU, PsbV and a large number of cofactors. It forms dimeric complexes.

It localises to the cellular thylakoid membrane. In terms of biological role, one of the components of the core complex of photosystem II (PSII). PSII is a light-driven water:plastoquinone oxidoreductase that uses light energy to abstract electrons from H(2)O, generating O(2) and a proton gradient subsequently used for ATP formation. It consists of a core antenna complex that captures photons, and an electron transfer chain that converts photonic excitation into a charge separation. In Prochlorococcus marinus (strain MIT 9303), this protein is Photosystem II reaction center protein J.